The sequence spans 285 residues: MVLMIVSGRSGSGKSVALRALEDMGFYCVDNLPVVLLPELANTLAARNISAAVSIDVRNMPESPEIFEHAMEQLPPSFSPQLLFLDADRNTLIRRYSDTRRLHPLSSKNLSLESAIDEESDLLEPLRSRADLIIDTSEMSVHELAEMLRTRLLGKRERELTMVFESFGFKHGIPIDADYVFDVRFLPNPHWDPKLRPMTGLDKPVASFLDRHTEVHNFIYQTRSYLELWLPMLETNNRSYLTVAIGCTGGKHRSVYVAEQLADYFRSRGKNVQSRHRTLEKRKPS.

8–15 lines the ATP pocket; it reads GRSGSGKS. 56-59 is a GTP binding site; that stretch reads DVRN. The RNA-binding stretch occupies residues 266 to 285; sequence RSRGKNVQSRHRTLEKRKPS.

This sequence belongs to the RapZ-like family. RapZ subfamily. As to quaternary structure, homotrimer.

Functionally, modulates the synthesis of GlmS, by affecting the processing and stability of the regulatory small RNA GlmZ. When glucosamine-6-phosphate (GlcN6P) concentrations are high in the cell, RapZ binds GlmZ and targets it to cleavage by RNase E. Consequently, GlmZ is inactivated and unable to activate GlmS synthesis. Under low GlcN6P concentrations, RapZ is sequestered and inactivated by an other regulatory small RNA, GlmY, preventing GlmZ degradation and leading to synthesis of GlmS. This chain is RNase adapter protein RapZ, found in Pectobacterium atrosepticum (strain SCRI 1043 / ATCC BAA-672) (Erwinia carotovora subsp. atroseptica).